Here is a 119-residue protein sequence, read N- to C-terminus: Large ribosomal subunit protein bL19 (119 aa).

It belongs to the bacterial ribosomal protein bL19 family.

Functionally, this protein is located at the 30S-50S ribosomal subunit interface and may play a role in the structure and function of the aminoacyl-tRNA binding site. This Psychromonas ingrahamii (strain DSM 17664 / CCUG 51855 / 37) protein is Large ribosomal subunit protein bL19.